The following is a 412-amino-acid chain: CinA-like protein (412 aa).

The protein belongs to the CinA family.

The chain is CinA-like protein from Syntrophotalea carbinolica (strain DSM 2380 / NBRC 103641 / GraBd1) (Pelobacter carbinolicus).